The chain runs to 999 residues: Translation initiation factor IF-2 (999 aa).

Residues 50–407 (AFVNNTGSPA…RGQGQTVRLS (358 aa)) form a disordered region. Pro residues-rich tracts occupy residues 60–89 (PAAP…PPGG) and 96–121 (PMPP…PPQS). The segment covering 136–162 (VAAAEARAAALKAEQEAAVKAAQAARQ) has biased composition (low complexity). The segment covering 163–173 (QQRDNVRREPP) has biased composition (basic and acidic residues). A compositionally biased stretch (pro residues) spans 179–194 (RPGPRPGPGAMPPRPG). The span at 213–222 (GGRPPARGAG) shows a compositional bias: low complexity. Pro residues predominate over residues 244–266 (RPSPASMPPRPSPASMPPRPSPA). Positions 275-367 (RPGGPGSGRP…GAAGAFGRPG (93 aa)) are enriched in gly residues. Positions 371–380 (TRGRKSKKQR) are enriched in basic residues. Polar residues predominate over residues 388–405 (SAPTMSSGAPRGQGQTVR). Residues 490-662 (SRPPVVTVMG…VLLTADASLE (173 aa)) form the tr-type G domain. Residues 499–506 (GHVDHGKT) are G1. 499 to 506 (GHVDHGKT) serves as a coordination point for GTP. The G2 stretch occupies residues 524 to 528 (GITQH). A G3 region spans residues 549 to 552 (DTPG). GTP contacts are provided by residues 549-553 (DTPGH) and 603-606 (NKID). Residues 603 to 606 (NKID) are G4. Positions 639–641 (AAK) are G5.

This sequence belongs to the TRAFAC class translation factor GTPase superfamily. Classic translation factor GTPase family. IF-2 subfamily.

The protein resides in the cytoplasm. Functionally, one of the essential components for the initiation of protein synthesis. Protects formylmethionyl-tRNA from spontaneous hydrolysis and promotes its binding to the 30S ribosomal subunits. Also involved in the hydrolysis of GTP during the formation of the 70S ribosomal complex. In Salinispora tropica (strain ATCC BAA-916 / DSM 44818 / JCM 13857 / NBRC 105044 / CNB-440), this protein is Translation initiation factor IF-2.